Reading from the N-terminus, the 232-residue chain is UPF0502 protein Aave_3438 (232 aa).

The protein belongs to the UPF0502 family.

This Paracidovorax citrulli (strain AAC00-1) (Acidovorax citrulli) protein is UPF0502 protein Aave_3438.